Here is a 584-residue protein sequence, read N- to C-terminus: PE-PGRS family protein PE_PGRS11 (584 aa).

The PE domain maps to methionine 1–valine 92. The active-site Tele-phosphohistidine intermediate is the histidine 290. Glutamate 365 (proton donor/acceptor) is an active-site residue. The segment at tyrosine 384 to proline 584 is phosphoglycerate mutase.

In the N-terminal section; belongs to the mycobacterial PE family. PGRS subfamily. This sequence in the C-terminal section; belongs to the phosphoglycerate mutase family. As to quaternary structure, interacts with human TLR2. The cofactor is Mg(2+).

The protein localises to the secreted. The protein resides in the cell wall. It localises to the cell surface. It catalyses the reaction (2R)-2-phosphoglycerate = (2R)-3-phosphoglycerate. Functionally, induces maturation and activation of human dendritic cells (DCs), via TLR2-dependent activation of ERK1/2, p38 MAPK, and NF-kappa-B signaling pathways, and enhances the ability of DCs to stimulate CD4(+) T cells. By activating DCs, could potentially contribute to the initiation of innate immune responses during tuberculosis infection and hence regulate the clinical course of tuberculosis. Involved in resistance to oxidative stress, via TLR2-dependent activation of the PI3K-ERK1/2-NF-kappa-B signaling pathway and expression of COX-2 and Bcl2. Also abolishes H(2)O(2)-triggered activation of p38 MAPK. The sequence is that of PE-PGRS family protein PE_PGRS11 from Mycobacterium tuberculosis (strain ATCC 25618 / H37Rv).